A 506-amino-acid chain; its full sequence is Galactose/methyl galactoside import ATP-binding protein MglA (506 aa).

2 ABC transporter domains span residues 14–249 (LEMS…VGRS) and 264–506 (VILE…SLHL). 46–53 (GENGAGKS) provides a ligand contact to ATP.

The protein belongs to the ABC transporter superfamily. Galactose/methyl galactoside importer (TC 3.A.1.2.3) family. In terms of assembly, the complex is composed of one ATP-binding protein (MglA), two transmembrane proteins (MglC) and a solute-binding protein (MglB).

Its subcellular location is the cell inner membrane. It carries out the reaction D-galactose(out) + ATP + H2O = D-galactose(in) + ADP + phosphate + H(+). It catalyses the reaction methyl beta-D-galactoside(out) + ATP + H2O = methyl beta-D-galactoside(in) + ADP + phosphate + H(+). Functionally, part of the ABC transporter complex MglABC involved in galactose/methyl galactoside import. Responsible for energy coupling to the transport system. This is Galactose/methyl galactoside import ATP-binding protein MglA from Shigella flexneri serotype 5b (strain 8401).